Reading from the N-terminus, the 864-residue chain is Microtubule-associated protein TORTIFOLIA1 (864 aa).

Residues 1–26 (MSTPTTSGSAAKPTRPARSSSLATRS) form a disordered region. Positions 17–26 (ARSSSLATRS) are enriched in polar residues. HEAT repeat units follow at residues 76-113 (ETLP…LHCD), 117-154 (AHLT…IYLK), 167-204 (LAVG…SAAS), 208-245 (TSFQ…VGAI), and 248-285 (QSLE…HSSG). The interval 329–353 (DGASDDSKLSASEQLGSEKNGEKRS) is disordered. Phosphoserine is present on S414. The tract at residues 426-504 (NDEEESGLDD…QSEGSFTSNR (79 aa)) is disordered. Polar residues predominate over residues 439-448 (MGSSNRLKNT). Residues 449-459 (QADDKQVKGRF) are compositionally biased toward basic and acidic residues. A compositionally biased stretch (polar residues) spans 489 to 504 (VSNTDNQSEGSFTSNR). Residues 508 to 561 (SAIQRQLLQLERQQTNLMNMLQEFIGGSHDSMVTLEGRVRGLERIVEDMARDLS) are a coiled coil. The disordered stretch occupies residues 615–670 (DDWFIPPHAASRNGQAGPRRSPRSEQYENEHMGNGRRGWDNKASGTIRFGEGPSAR). Positions 636-654 (PRSEQYENEHMGNGRRGWD) are enriched in basic and acidic residues.

Interacts with WAV3. In terms of tissue distribution, expressed in roots, hypocotyls, stems, flowers, siliques, inflorescences, petioles, cotyledons, and leaves. Particularly present in root tips and shoot meristems.

The protein resides in the cytoplasm. Its subcellular location is the cytoskeleton. Plant-specific microtubule-associated protein (MAP) that regulates the orientation of cortical microtubules and the direction of organ growth. Determines microtubule organization by modulating microtubule severing. The protein is Microtubule-associated protein TORTIFOLIA1 of Arabidopsis thaliana (Mouse-ear cress).